The primary structure comprises 125 residues: 14 kDa phosphohistidine phosphatase (125 aa).

The residue at position 2 (Ala-2) is an N-acetylalanine. Lys-21 lines the substrate pocket. Catalysis depends on His-53, which acts as the Proton acceptor. Ser-94–Gly-96 serves as a coordination point for substrate.

In terms of assembly, monomer.

It localises to the cytoplasm. The catalysed reaction is N(pros)-phospho-L-histidyl-[protein] + H2O = L-histidyl-[protein] + phosphate. It catalyses the reaction N(tele)-phospho-L-histidyl-[protein] + H2O = L-histidyl-[protein] + phosphate. Functionally, exhibits phosphohistidine phosphatase activity. May have a significant involvement in neuronal signaling. The polypeptide is 14 kDa phosphohistidine phosphatase (PHPT1) (Oryctolagus cuniculus (Rabbit)).